A 484-amino-acid chain; its full sequence is Adenylyltransferase and sulfurtransferase uba4 (484 aa).

Positions 39–49 (AKAQSAAATTA) are enriched in low complexity. Positions 39-58 (AKAQSAAATTAGDNHDKPRR) are disordered. Residues glycine 98, aspartate 119, 126 to 130 (SNLHR), lysine 143, and 187 to 188 (DN) contribute to the ATP site. Zn(2+)-binding residues include cysteine 236 and cysteine 239. Cysteine 253 functions as the Glycyl thioester intermediate; for adenylyltransferase activity in the catalytic mechanism. Residues cysteine 313 and cysteine 316 each contribute to the Zn(2+) site. Residues 370–482 (PEKTPTLIDV…WREQVDPEWP (113 aa)) form the Rhodanese domain. Cysteine 437 serves as the catalytic Cysteine persulfide intermediate; for sulfurtransferase activity.

The protein in the N-terminal section; belongs to the HesA/MoeB/ThiF family. UBA4 subfamily. The cofactor is Zn(2+).

The protein localises to the cytoplasm. The protein resides in the cytosol. The enzyme catalyses [molybdopterin-synthase sulfur-carrier protein]-C-terminal Gly-Gly + ATP + H(+) = [molybdopterin-synthase sulfur-carrier protein]-C-terminal Gly-Gly-AMP + diphosphate. It carries out the reaction [molybdopterin-synthase sulfur-carrier protein]-C-terminal Gly-Gly-AMP + S-sulfanyl-L-cysteinyl-[cysteine desulfurase] + AH2 = [molybdopterin-synthase sulfur-carrier protein]-C-terminal-Gly-aminoethanethioate + L-cysteinyl-[cysteine desulfurase] + A + AMP + 2 H(+). The protein operates within tRNA modification; 5-methoxycarbonylmethyl-2-thiouridine-tRNA biosynthesis. It functions in the pathway cofactor biosynthesis; molybdopterin biosynthesis. In terms of biological role, plays a central role in 2-thiolation of mcm(5)S(2)U at tRNA wobble positions of cytosolic tRNA(Lys), tRNA(Glu) and tRNA(Gln). Also essential during biosynthesis of the molybdenum cofactor. Acts by mediating the C-terminal thiocarboxylation of sulfur carriers urm1 and mocs2a. Its N-terminus first activates urm1 and mocs2a as acyl-adenylates (-COAMP), then the persulfide sulfur on the catalytic cysteine is transferred to urm1 and mocs2a to form thiocarboxylation (-COSH) of their C-terminus. The reaction probably involves hydrogen sulfide that is generated from the persulfide intermediate and that acts as a nucleophile towards urm1 and mocs2a. Subsequently, a transient disulfide bond is formed. Does not use thiosulfate as sulfur donor; nfs1 probably acting as a sulfur donor for thiocarboxylation reactions. This is Adenylyltransferase and sulfurtransferase uba4 from Aspergillus terreus (strain NIH 2624 / FGSC A1156).